Here is a 199-residue protein sequence, read N- to C-terminus: Small ribosomal subunit protein uS5 (199 aa).

The interval 1–29 (MATAGRRGGAASERRERRESRRQEASPEK) is disordered. The span at 12–27 (SERRERRESRRQEASP) shows a compositional bias: basic and acidic residues. In terms of domain architecture, S5 DRBM spans 32–95 (FLERVVTINR…EEAKKHFFTV (64 aa)).

It belongs to the universal ribosomal protein uS5 family. In terms of assembly, part of the 30S ribosomal subunit. Contacts proteins S4 and S8.

Its function is as follows. With S4 and S12 plays an important role in translational accuracy. Located at the back of the 30S subunit body where it stabilizes the conformation of the head with respect to the body. The sequence is that of Small ribosomal subunit protein uS5 from Acidothermus cellulolyticus (strain ATCC 43068 / DSM 8971 / 11B).